The chain runs to 274 residues: Diaminopimelate epimerase (274 aa).

Residues N11, Q44, and N64 each coordinate substrate. Catalysis depends on C73, which acts as the Proton donor. Substrate is bound by residues 74–75 (GN), N157, N190, and 208–209 (ER). C217 functions as the Proton acceptor in the catalytic mechanism. Residue 218-219 (GS) coordinates substrate.

Belongs to the diaminopimelate epimerase family. Homodimer.

It localises to the cytoplasm. It catalyses the reaction (2S,6S)-2,6-diaminopimelate = meso-2,6-diaminopimelate. Its pathway is amino-acid biosynthesis; L-lysine biosynthesis via DAP pathway; DL-2,6-diaminopimelate from LL-2,6-diaminopimelate: step 1/1. Catalyzes the stereoinversion of LL-2,6-diaminopimelate (L,L-DAP) to meso-diaminopimelate (meso-DAP), a precursor of L-lysine and an essential component of the bacterial peptidoglycan. This chain is Diaminopimelate epimerase, found in Shigella flexneri serotype 5b (strain 8401).